A 491-amino-acid chain; its full sequence is Protein nucleotidyltransferase YdiU (491 aa).

Residues glycine 92, glycine 94, arginine 95, lysine 115, aspartate 127, glycine 128, arginine 178, and arginine 185 each coordinate ATP. Catalysis depends on aspartate 254, which acts as the Proton acceptor. Positions 255 and 264 each coordinate Mg(2+). Position 264 (aspartate 264) interacts with ATP.

This sequence belongs to the SELO family. Mg(2+) serves as cofactor. The cofactor is Mn(2+).

The enzyme catalyses L-seryl-[protein] + ATP = 3-O-(5'-adenylyl)-L-seryl-[protein] + diphosphate. It catalyses the reaction L-threonyl-[protein] + ATP = 3-O-(5'-adenylyl)-L-threonyl-[protein] + diphosphate. It carries out the reaction L-tyrosyl-[protein] + ATP = O-(5'-adenylyl)-L-tyrosyl-[protein] + diphosphate. The catalysed reaction is L-histidyl-[protein] + UTP = N(tele)-(5'-uridylyl)-L-histidyl-[protein] + diphosphate. The enzyme catalyses L-seryl-[protein] + UTP = O-(5'-uridylyl)-L-seryl-[protein] + diphosphate. It catalyses the reaction L-tyrosyl-[protein] + UTP = O-(5'-uridylyl)-L-tyrosyl-[protein] + diphosphate. Its function is as follows. Nucleotidyltransferase involved in the post-translational modification of proteins. It can catalyze the addition of adenosine monophosphate (AMP) or uridine monophosphate (UMP) to a protein, resulting in modifications known as AMPylation and UMPylation. This Mycolicibacterium paratuberculosis (strain ATCC BAA-968 / K-10) (Mycobacterium paratuberculosis) protein is Protein nucleotidyltransferase YdiU.